The primary structure comprises 296 residues: Cytidine deaminase (296 aa).

CMP/dCMP-type deaminase domains lie at 47–167 (TEAE…FGPK) and 186–296 (DSSD…VDPV). 88 to 90 (NLE) contacts substrate. Histidine 101 contacts Zn(2+). Glutamate 103 (proton donor) is an active-site residue. The Zn(2+) site is built by cysteine 128 and cysteine 131.

The protein belongs to the cytidine and deoxycytidylate deaminase family. In terms of assembly, homodimer. Zn(2+) serves as cofactor.

The enzyme catalyses cytidine + H2O + H(+) = uridine + NH4(+). It carries out the reaction 2'-deoxycytidine + H2O + H(+) = 2'-deoxyuridine + NH4(+). This enzyme scavenges exogenous and endogenous cytidine and 2'-deoxycytidine for UMP synthesis. The chain is Cytidine deaminase from Shewanella sp. (strain MR-7).